Reading from the N-terminus, the 388-residue chain is Serpin B11 (388 aa).

Residues 338 to 362 are RCL; it reads EEGTEAAAATGESISVKRLPVTVQF.

This sequence belongs to the serpin family. Ov-serpin subfamily. Expressed in eye, lung, lymphocytes, thymus, stomach, uterus, heart, brain, liver, skeletal muscle, and in day 7, 15, and 17 embryos.

The protein resides in the cytoplasm. In terms of biological role, inhibitor of serine proteases. Has moderate inhibitory activity for trypsin-like peptidases, but also some activity with cysteine peptidases, cathepsin L, K, and V, and the serine peptidase, tryptase gamma. This Mus musculus (Mouse) protein is Serpin B11 (Serpinb11).